Reading from the N-terminus, the 684-residue chain is Protein SEEDLING PLASTID DEVELOPMENT 1 (684 aa).

Residues 1–78 (MRALNSRLVL…FSFDVRSPSS (78 aa)) constitute a chloroplast transit peptide. The tract at residues 33–91 (SDSSSSFRRTRGARQRIASSKSPASSPSPVRRPSDGFSFDVRSPSSDSSISSRKSPTTA) is disordered. Residues 50–88 (ASSKSPASSPSPVRRPSDGFSFDVRSPSSDSSISSRKSP) are compositionally biased toward low complexity. Residue 220–227 (GSPGVGKT) participates in ATP binding. A disordered region spans residues 651–684 (PRRSTKKTLTSSSPQKSADGSMGTTGTRLPFLKD). The segment covering 657 to 667 (KTLTSSSPQKS) has biased composition (low complexity).

Belongs to the ycf45 family.

The protein resides in the plastid. It localises to the chloroplast membrane. It is found in the chloroplast envelope. In terms of biological role, required during eoplast (a highly reduced plastid type present during the degreening and dehydration stages of seed maturation) development in embryos and early stages of eoplast redifferentiation during seedling growth. This is Protein SEEDLING PLASTID DEVELOPMENT 1 from Arabidopsis thaliana (Mouse-ear cress).